The sequence spans 398 residues: Tryptophan synthase beta chain (398 aa).

N6-(pyridoxal phosphate)lysine is present on Lys88.

The protein belongs to the TrpB family. Tetramer of two alpha and two beta chains. It depends on pyridoxal 5'-phosphate as a cofactor.

The catalysed reaction is (1S,2R)-1-C-(indol-3-yl)glycerol 3-phosphate + L-serine = D-glyceraldehyde 3-phosphate + L-tryptophan + H2O. It functions in the pathway amino-acid biosynthesis; L-tryptophan biosynthesis; L-tryptophan from chorismate: step 5/5. Its function is as follows. The beta subunit is responsible for the synthesis of L-tryptophan from indole and L-serine. The polypeptide is Tryptophan synthase beta chain (Haemophilus influenzae (strain PittGG)).